The following is a 180-amino-acid chain: Shikimate kinase (180 aa).

14–19 is a binding site for ATP; that stretch reads GAGKSC. Position 18 (S18) interacts with Mg(2+). Substrate contacts are provided by D36, R60, and G82. Residue R120 coordinates ATP. A substrate-binding site is contributed by R139.

This sequence belongs to the shikimate kinase family. In terms of assembly, monomer. It depends on Mg(2+) as a cofactor.

It localises to the cytoplasm. The catalysed reaction is shikimate + ATP = 3-phosphoshikimate + ADP + H(+). It participates in metabolic intermediate biosynthesis; chorismate biosynthesis; chorismate from D-erythrose 4-phosphate and phosphoenolpyruvate: step 5/7. Functionally, catalyzes the specific phosphorylation of the 3-hydroxyl group of shikimic acid using ATP as a cosubstrate. The sequence is that of Shikimate kinase from Xanthomonas euvesicatoria pv. vesicatoria (strain 85-10) (Xanthomonas campestris pv. vesicatoria).